Reading from the N-terminus, the 329-residue chain is Glycerol-3-phosphate dehydrogenase [NAD(P)+] (329 aa).

NADPH-binding residues include Trp-11, Arg-30, and Lys-103. Positions 103, 132, and 134 each coordinate sn-glycerol 3-phosphate. Ala-136 contacts NADPH. The sn-glycerol 3-phosphate site is built by Lys-187, Asp-240, Ser-250, Arg-251, and Asn-252. The Proton acceptor role is filled by Lys-187. Arg-251 is an NADPH binding site. NADPH-binding residues include Val-275 and Glu-277.

The protein belongs to the NAD-dependent glycerol-3-phosphate dehydrogenase family.

Its subcellular location is the cytoplasm. It carries out the reaction sn-glycerol 3-phosphate + NAD(+) = dihydroxyacetone phosphate + NADH + H(+). It catalyses the reaction sn-glycerol 3-phosphate + NADP(+) = dihydroxyacetone phosphate + NADPH + H(+). Its pathway is membrane lipid metabolism; glycerophospholipid metabolism. Catalyzes the reduction of the glycolytic intermediate dihydroxyacetone phosphate (DHAP) to sn-glycerol 3-phosphate (G3P), the key precursor for phospholipid synthesis. The sequence is that of Glycerol-3-phosphate dehydrogenase [NAD(P)+] from Dechloromonas aromatica (strain RCB).